The chain runs to 87 residues: HssA/B-like protein 57 (87 aa).

It belongs to the hssA/B family.

The sequence is that of HssA/B-like protein 57 (hssl57) from Dictyostelium discoideum (Social amoeba).